Reading from the N-terminus, the 112-residue chain is Small ribosomal subunit protein bS6 (112 aa).

Belongs to the bacterial ribosomal protein bS6 family.

Its function is as follows. Binds together with bS18 to 16S ribosomal RNA. The protein is Small ribosomal subunit protein bS6 (rpsF) of Chlamydia pneumoniae (Chlamydophila pneumoniae).